Here is an 86-residue protein sequence, read N- to C-terminus: Omega-theraphotoxin-Hhn1a 1 (86 aa).

Residues 1–21 (MKSIVFVALFGLALLAVVCSA) form the signal peptide. The propeptide occupies 22 to 50 (SEDAHKELLKEVVRAMVVDKTDAVQAEER). Intrachain disulfides connect Cys-52–Cys-66, Cys-59–Cys-71, and Cys-65–Cys-78.

This sequence belongs to the neurotoxin 10 (Hwtx-1) family. 17 (Hntx-9) subfamily. In terms of tissue distribution, expressed by the venom gland.

Its subcellular location is the secreted. Its function is as follows. Ion channel inhibitor. This is Omega-theraphotoxin-Hhn1a 1 from Cyriopagopus hainanus (Chinese bird spider).